The primary structure comprises 535 residues: tRNA-2-methylthio-N(6)-dimethylallyladenosine synthase (535 aa).

Residues 24–139 (RTYEVRTFGC…LPRLLERARH (116 aa)) enclose the MTTase N-terminal domain. [4Fe-4S] cluster contacts are provided by Cys-33, Cys-68, Cys-102, Cys-176, Cys-180, and Cys-183. The 231-residue stretch at 162-392 (RDSSFSGWVS…IALQERISLE (231 aa)) folds into the Radical SAM core domain. A TRAM domain is found at 395-465 (EKLIGRDVEL…PHYLIADAAG (71 aa)). The tract at residues 512–535 (RTREPLTSPGVGTMPLYDPTDGQR) is disordered.

It belongs to the methylthiotransferase family. MiaB subfamily. Monomer. Requires [4Fe-4S] cluster as cofactor.

It localises to the cytoplasm. The catalysed reaction is N(6)-dimethylallyladenosine(37) in tRNA + (sulfur carrier)-SH + AH2 + 2 S-adenosyl-L-methionine = 2-methylsulfanyl-N(6)-dimethylallyladenosine(37) in tRNA + (sulfur carrier)-H + 5'-deoxyadenosine + L-methionine + A + S-adenosyl-L-homocysteine + 2 H(+). Functionally, catalyzes the methylthiolation of N6-(dimethylallyl)adenosine (i(6)A), leading to the formation of 2-methylthio-N6-(dimethylallyl)adenosine (ms(2)i(6)A) at position 37 in tRNAs that read codons beginning with uridine. This Leifsonia xyli subsp. xyli (strain CTCB07) protein is tRNA-2-methylthio-N(6)-dimethylallyladenosine synthase.